Consider the following 431-residue polypeptide: uncharacterized protein (431 aa).

A run of 12 helical transmembrane segments spans residues 33–53, 63–83, 111–131, 143–163, 175–195, 197–217, 241–261, 273–293, 318–338, 358–378, 381–401, and 407–427; these read VARV…VIYL, FSVF…ANGL, VSGM…PLWS, VALL…LGML, LMVA…VIGW, LVGF…MLMT, AHSI…PVLL, GVVI…LTAM, LIGG…PWIM, AAAV…AAAL, AYSL…LLPL, and TVVA…VALA.

To M.tuberculosis Rv1510 and M.bovis Mb3654.

It is found in the cell membrane. This is an uncharacterized protein from Mycobacterium tuberculosis (strain ATCC 25618 / H37Rv).